The primary structure comprises 307 residues: N-acetylmuramic acid 6-phosphate etherase (307 aa).

The 164-residue stretch at 62–225 (IVSSFNRGGR…STASMIRIGK (164 aa)) folds into the SIS domain. The active-site Proton donor is the Glu90. Glu121 is a catalytic residue.

Belongs to the GCKR-like family. MurNAc-6-P etherase subfamily. Homodimer.

It carries out the reaction N-acetyl-D-muramate 6-phosphate + H2O = N-acetyl-D-glucosamine 6-phosphate + (R)-lactate. It participates in amino-sugar metabolism; 1,6-anhydro-N-acetylmuramate degradation. Its pathway is amino-sugar metabolism; N-acetylmuramate degradation. It functions in the pathway cell wall biogenesis; peptidoglycan recycling. Functionally, specifically catalyzes the cleavage of the D-lactyl ether substituent of MurNAc 6-phosphate, producing GlcNAc 6-phosphate and D-lactate. Together with AnmK, is also required for the utilization of anhydro-N-acetylmuramic acid (anhMurNAc) either imported from the medium or derived from its own cell wall murein, and thus plays a role in cell wall recycling. This Pseudoalteromonas atlantica (strain T6c / ATCC BAA-1087) protein is N-acetylmuramic acid 6-phosphate etherase.